The chain runs to 268 residues: Myeloid leukemia factor 1 (268 aa).

A phosphoserine mark is found at serine 6, serine 8, and serine 32. An interaction with COPS3 region spans residues 50-125; sequence RVHNRRGHND…IGDEPPKVFQ (76 aa). Residues 208 to 268 are disordered; the sequence is PGRHNLENTR…KGSSVKSNKK (61 aa). 2 stretches are compositionally biased toward basic and acidic residues: residues 226 to 237 and 244 to 257; these read PGSRELKRREKP and EHGR…DKLH.

This sequence belongs to the MLF family. Interacts with CENPU. Also interacts with NRBP1/MADM, YWHAZ/14-3-3-zeta and HNRPUL2/MANP. NRBP1 recruits a serine kinase which phosphorylates both itself and MLF1. Phosphorylated MLF1 then binds to YWHAZ and is retained in the cytoplasm. Retained in the nucleus by binding to HNRPUL2. Binds to COPS3/CSN3 which is required for suppression of COP1 and activation of p53. Phosphorylation is required for binding to YWHAZ.

It is found in the cytoplasm. Its subcellular location is the nucleus. The protein resides in the cell projection. The protein localises to the cilium. It localises to the cytoskeleton. It is found in the cilium basal body. In terms of biological role, involved in lineage commitment of primary hemopoietic progenitors by restricting erythroid formation and enhancing myeloid formation. Interferes with erythropoietin-induced erythroid terminal differentiation by preventing cells from exiting the cell cycle through suppression of CDKN1B/p27Kip1 levels. Suppresses COP1 activity via CSN3 which activates p53 and induces cell cycle arrest. Binds DNA and affects the expression of a number of genes so may function as a transcription factor in the nucleus. This chain is Myeloid leukemia factor 1 (MLF1), found in Pongo abelii (Sumatran orangutan).